Reading from the N-terminus, the 368-residue chain is Cytochrome b (368 aa).

Transmembrane regions (helical) follow at residues 32–52 (FGFLVAMTFVLQIITGITLAF), 76–98 (WEFRMLHATTASFVFLCILIHMT), 112–132 (AWMSGLVLYLLTIATAFLGYV), and 174–194 (FFVLHFILPFIGCIIIVLHIF). Heme b-binding residues include His82 and His96. His178 and His192 together coordinate heme b. His197 contributes to the a ubiquinone binding site. The next 4 helical transmembrane spans lie at 219 to 239 (MLMTDAKCLSYLIGLIFLQAA), 285 to 305 (GLLVFMSSLINLGLLSEIRAL), 323 to 343 (GWVIIWVYSMIFLIIIGSAIP), and 347 to 367 (YILYGRLATILYLTTGLVLCL).

It belongs to the cytochrome b family. In terms of assembly, the main subunits of complex b-c1 are: cytochrome b, cytochrome c1 and the Rieske protein. The cofactor is heme b.

Its subcellular location is the mitochondrion inner membrane. Its function is as follows. Component of the ubiquinol-cytochrome c reductase complex (complex III or cytochrome b-c1 complex) that is part of the mitochondrial respiratory chain. The b-c1 complex mediates electron transfer from ubiquinol to cytochrome c. Contributes to the generation of a proton gradient across the mitochondrial membrane that is then used for ATP synthesis. In Toxoplasma gondii, this protein is Cytochrome b (MT-CYB).